The sequence spans 171 residues: MRIGHGYDVHKLVSGRKLILGGVDIPYERGLLGHSDADVLLHAISDAILGAIGEGDIGKHFPDTDPAYKGADSIKLLMHVMGLARDRGYAIGNVDATIVAQRPKLAAHIPLMGENIAKALETEASRINVKATTTEELGFCGRGEGIAAYAVALLQRRHELSPETREVLETR.

A divalent metal cation-binding residues include D8 and H10. 4-CDP-2-C-methyl-D-erythritol 2-phosphate-binding positions include 8 to 10 and 34 to 35; these read DVH and HS. H42 contacts a divalent metal cation. 4-CDP-2-C-methyl-D-erythritol 2-phosphate-binding positions include 56-58, 61-65, 132-135, F139, and R142; these read DIG, FPDTD, and TTTE.

The protein belongs to the IspF family. In terms of assembly, homotrimer. It depends on a divalent metal cation as a cofactor.

The enzyme catalyses 4-CDP-2-C-methyl-D-erythritol 2-phosphate = 2-C-methyl-D-erythritol 2,4-cyclic diphosphate + CMP. The protein operates within isoprenoid biosynthesis; isopentenyl diphosphate biosynthesis via DXP pathway; isopentenyl diphosphate from 1-deoxy-D-xylulose 5-phosphate: step 4/6. Functionally, involved in the biosynthesis of isopentenyl diphosphate (IPP) and dimethylallyl diphosphate (DMAPP), two major building blocks of isoprenoid compounds. Catalyzes the conversion of 4-diphosphocytidyl-2-C-methyl-D-erythritol 2-phosphate (CDP-ME2P) to 2-C-methyl-D-erythritol 2,4-cyclodiphosphate (ME-CPP) with a corresponding release of cytidine 5-monophosphate (CMP). The sequence is that of 2-C-methyl-D-erythritol 2,4-cyclodiphosphate synthase from Geotalea daltonii (strain DSM 22248 / JCM 15807 / FRC-32) (Geobacter daltonii).